The sequence spans 261 residues: Kallikrein-2 (261 aa).

The first 18 residues, 1-18, serve as a signal peptide directing secretion; sequence MWDLVLSIALSVGCTGAV. A propeptide spans 19-24 (activation peptide); the sequence is PLIQSR. The region spanning 25–258 is the Peptidase S1 domain; sequence IVGGWECEKH…YRKWIKDTIA (234 aa). 5 disulfide bridges follow: Cys-31–Cys-173, Cys-50–Cys-66, Cys-152–Cys-219, Cys-184–Cys-198, and Cys-209–Cys-234. The Charge relay system role is filled by His-65. A glycan (N-linked (GlcNAc...) asparagine) is linked at Asn-102. Catalysis depends on Asp-120, which acts as the Charge relay system. Ser-213 (charge relay system) is an active-site residue.

It belongs to the peptidase S1 family. Kallikrein subfamily.

It catalyses the reaction Preferential cleavage of Arg-|-Xaa bonds in small molecule substrates. Highly selective action to release kallidin (lysyl-bradykinin) from kininogen involves hydrolysis of Met-|-Xaa or Leu-|-Xaa.. Its function is as follows. Glandular kallikreins cleave Met-Lys and Arg-Ser bonds in kininogen to release Lys-bradykinin. This Homo sapiens (Human) protein is Kallikrein-2 (KLK2).